A 32-amino-acid chain; its full sequence is MESIAYVLIFACLIGLFFFAIFFREPPRITKK.

The chain crosses the membrane as a helical span at residues 3–23 (SIAYVLIFACLIGLFFFAIFF).

It belongs to the PsbT family. In terms of assembly, PSII is composed of 1 copy each of membrane proteins PsbA, PsbB, PsbC, PsbD, PsbE, PsbF, PsbH, PsbI, PsbJ, PsbK, PsbL, PsbM, PsbT, PsbX, PsbY, PsbZ, Psb30/Ycf12, peripheral proteins PsbO, CyanoQ (PsbQ), PsbU, PsbV and a large number of cofactors. It forms dimeric complexes.

The protein resides in the cellular thylakoid membrane. Its function is as follows. Found at the monomer-monomer interface of the photosystem II (PS II) dimer, plays a role in assembly and dimerization of PSII. PSII is a light-driven water plastoquinone oxidoreductase, using light energy to abstract electrons from H(2)O, generating a proton gradient subsequently used for ATP formation. This chain is Photosystem II reaction center protein T, found in Cyanothece sp. (strain PCC 7425 / ATCC 29141).